Here is a 79-residue protein sequence, read N- to C-terminus: Eumenine mastoparan-OD (79 aa).

The signal sequence occupies residues 1 to 24; sequence MKQTIVIVLLAAVAMMACLQMVAA. AXPX repeat units follow at residues 24 to 27, 30 to 33, 44 to 47, 52 to 55, and 58 to 61; these read AEPL, AAPA, ASPI, ANPE, and ASPE. A propeptide spanning residues 25-62 is cleaved from the precursor; it reads EPLPEAAPAPSPLAEAEALASPIAEALANPEALASPEA. Leu-76 carries the leucine amide modification.

In terms of tissue distribution, expressed by the venom gland.

The protein localises to the secreted. It is found in the target cell membrane. Functionally, antimicrobial peptide with strong activity against the fungi C.albicans (MIC=6 uM) and B.cinerea (MIC=10 uM), and weaker activity against the Gram-negative bacterium E.coli (MIC=97 uM) and Gram-positive bacterium S.aureus (MIC=97 uM). Shows cytolytic activity against insect cell lines. Has potent hemolytic activity against ovine erythrocytes (80% at 50 uM), but has no hemolytic activity against human erythrocytes. In vivo, peptide injection in the vicinity of the head and thorax of lepidopteran larvae induces feeding disorder that lasts one or two days before recovering. This chain is Eumenine mastoparan-OD, found in Orancistrocerus drewseni (Solitary wasp).